The following is a 290-amino-acid chain: Membrane protein insertase YidC (290 aa).

Positions 1–19 (MKKKALLPLFLGIMVFLAG) are cleaved as a signal peptide. Cys20 carries N-palmitoyl cysteine lipidation. Residue Cys20 is the site of S-diacylglycerol cysteine attachment. 5 consecutive transmembrane segments (helical) span residues 56–76 (YGLAIIILVLVIRIILLPFML), 134–154 (MLGCLPMLIQLPIIMGLYFVL), 176–196 (PDIWITIIAGVLYFIQAYVSS), 207–224 (GYMMMVISPIMIIWISLS), and 229–251 (LGLYWSVSAAFLVVQTHFANIYY). Residues 270 to 290 (HNGGSNKKGKNTQVVSKKKKK) form a disordered region.

This sequence belongs to the OXA1/ALB3/YidC family. Type 2 subfamily.

The protein localises to the cell membrane. Required for the insertion and/or proper folding and/or complex formation of integral membrane proteins into the membrane. Involved in integration of membrane proteins that insert both dependently and independently of the Sec translocase complex, as well as at least some lipoproteins. This chain is Membrane protein insertase YidC, found in Staphylococcus aureus (strain Mu3 / ATCC 700698).